The following is a 20-amino-acid chain: Ranalexin-1Cb (20 aa).

A disulfide bridge connects residues cysteine 14 and cysteine 20.

In terms of tissue distribution, expressed by the skin glands.

The protein resides in the secreted. Functionally, antibacterial activity against Gram-positive bacterium S.aureus and Gram-negative bacterium E.coli. Has activity against C.albicans. In Lithobates clamitans (Green frog), this protein is Ranalexin-1Cb.